Here is a 275-residue protein sequence, read N- to C-terminus: Membrane protein insertase YidC 2 (275 aa).

The signal sequence occupies residues 1–21 (MKKKNIILISVLLGALLLLTG). Cys22 carries the N-palmitoyl cysteine lipid modification. Residue Cys22 is the site of S-diacylglycerol cysteine attachment. 4 helical membrane-spanning segments follow: residues 48-68 (FVAKFVGGNYGIAIIITTLLI), 133-153 (QMGCLPLLIQMPILMAFYYAI), 174-194 (MVLAIIAGLVYLAQYFVSMIG), and 212-232 (IMILFVSFTAPSALALYWAVG).

This sequence belongs to the OXA1/ALB3/YidC family. Type 2 subfamily.

Its subcellular location is the cell membrane. Its function is as follows. Required for the insertion and/or proper folding and/or complex formation of integral membrane proteins into the membrane. Involved in integration of membrane proteins that insert both dependently and independently of the Sec translocase complex, as well as at least some lipoproteins. The protein is Membrane protein insertase YidC 2 of Listeria monocytogenes serotype 4b (strain F2365).